Consider the following 139-residue polypeptide: Large ribosomal subunit protein bL17 (139 aa).

The disordered stretch occupies residues 120-139; the sequence is EDAKGRDSGPTQDNSEAEAA.

As to quaternary structure, part of the 50S ribosomal subunit. Contacts protein L32. Post-translationally, may be methylated thrice, on undetermined residues.

The sequence is that of Large ribosomal subunit protein bL17 from Rhodopseudomonas palustris (strain ATCC BAA-98 / CGA009).